A 267-amino-acid polypeptide reads, in one-letter code: Phosphatidylserine decarboxylase proenzyme (267 aa).

Catalysis depends on charge relay system; for autoendoproteolytic cleavage activity residues Asp78, His132, and Ser236. Ser236 (schiff-base intermediate with substrate; via pyruvic acid; for decarboxylase activity) is an active-site residue. Ser236 bears the Pyruvic acid (Ser); by autocatalysis mark.

This sequence belongs to the phosphatidylserine decarboxylase family. PSD-B subfamily. Prokaryotic type I sub-subfamily. Heterodimer of a large membrane-associated beta subunit and a small pyruvoyl-containing alpha subunit. It depends on pyruvate as a cofactor. Post-translationally, is synthesized initially as an inactive proenzyme. Formation of the active enzyme involves a self-maturation process in which the active site pyruvoyl group is generated from an internal serine residue via an autocatalytic post-translational modification. Two non-identical subunits are generated from the proenzyme in this reaction, and the pyruvate is formed at the N-terminus of the alpha chain, which is derived from the carboxyl end of the proenzyme. The autoendoproteolytic cleavage occurs by a canonical serine protease mechanism, in which the side chain hydroxyl group of the serine supplies its oxygen atom to form the C-terminus of the beta chain, while the remainder of the serine residue undergoes an oxidative deamination to produce ammonia and the pyruvoyl prosthetic group on the alpha chain. During this reaction, the Ser that is part of the protease active site of the proenzyme becomes the pyruvoyl prosthetic group, which constitutes an essential element of the active site of the mature decarboxylase.

The protein resides in the cell membrane. The catalysed reaction is a 1,2-diacyl-sn-glycero-3-phospho-L-serine + H(+) = a 1,2-diacyl-sn-glycero-3-phosphoethanolamine + CO2. Its pathway is phospholipid metabolism; phosphatidylethanolamine biosynthesis; phosphatidylethanolamine from CDP-diacylglycerol: step 2/2. Its function is as follows. Catalyzes the formation of phosphatidylethanolamine (PtdEtn) from phosphatidylserine (PtdSer). The polypeptide is Phosphatidylserine decarboxylase proenzyme (Helicobacter pylori (strain Shi470)).